The primary structure comprises 70 residues: Protein SlyX homolog (70 aa).

This sequence belongs to the SlyX family.

This chain is Protein SlyX homolog, found in Shewanella denitrificans (strain OS217 / ATCC BAA-1090 / DSM 15013).